The chain runs to 465 residues: ATP-sulfurylase 3, chloroplastic (465 aa).

A chloroplast-targeting transit peptide spans 1-49 (MASMSTVFPKPTSFISQPLTKSHKSDSVTTSISFPSNSKTRSLRTISVR).

This sequence belongs to the sulfate adenylyltransferase family. As to quaternary structure, homotetramer.

The protein resides in the plastid. It localises to the chloroplast stroma. The catalysed reaction is sulfate + ATP + H(+) = adenosine 5'-phosphosulfate + diphosphate. Its pathway is sulfur metabolism; hydrogen sulfide biosynthesis; sulfite from sulfate: step 1/3. This chain is ATP-sulfurylase 3, chloroplastic (APS3), found in Arabidopsis thaliana (Mouse-ear cress).